A 150-amino-acid chain; its full sequence is D-aminoacyl-tRNA deacylase (150 aa).

The Gly-cisPro motif, important for rejection of L-amino acids signature appears at 140–141; the sequence is GP.

The protein belongs to the DTD family. As to quaternary structure, homodimer.

The protein resides in the cytoplasm. It carries out the reaction glycyl-tRNA(Ala) + H2O = tRNA(Ala) + glycine + H(+). The catalysed reaction is a D-aminoacyl-tRNA + H2O = a tRNA + a D-alpha-amino acid + H(+). Functionally, an aminoacyl-tRNA editing enzyme that deacylates mischarged D-aminoacyl-tRNAs. Also deacylates mischarged glycyl-tRNA(Ala), protecting cells against glycine mischarging by AlaRS. Acts via tRNA-based rather than protein-based catalysis; rejects L-amino acids rather than detecting D-amino acids in the active site. By recycling D-aminoacyl-tRNA to D-amino acids and free tRNA molecules, this enzyme counteracts the toxicity associated with the formation of D-aminoacyl-tRNA entities in vivo and helps enforce protein L-homochirality. The sequence is that of D-aminoacyl-tRNA deacylase (DTD1) from Eremothecium gossypii (strain ATCC 10895 / CBS 109.51 / FGSC 9923 / NRRL Y-1056) (Yeast).